The sequence spans 209 residues: MSGKKRTASSSRWMQEHFDDHYVKLSQKRGLRSRAAFKIEEIQEKDKLIRPGMTVVDLGAAPGGWSQIAVKLAGDKGKVIACDILPMDPIVGVDFLQGDFREEKVLDALLTRVGDAKVDVVLSDMAPNMSGTGGVDQPRAMYLVELALDMCHQVLAPNGSFAVKVFQGEGFDEYMKAVKEAFKTVKTRKPDSSRPRSREVYLVATGYKL.

S-adenosyl-L-methionine-binding residues include glycine 63, tryptophan 65, aspartate 83, aspartate 99, and aspartate 124. Lysine 164 serves as the catalytic Proton acceptor.

This sequence belongs to the class I-like SAM-binding methyltransferase superfamily. RNA methyltransferase RlmE family.

It is found in the cytoplasm. The catalysed reaction is uridine(2552) in 23S rRNA + S-adenosyl-L-methionine = 2'-O-methyluridine(2552) in 23S rRNA + S-adenosyl-L-homocysteine + H(+). Its function is as follows. Specifically methylates the uridine in position 2552 of 23S rRNA at the 2'-O position of the ribose in the fully assembled 50S ribosomal subunit. This chain is Ribosomal RNA large subunit methyltransferase E, found in Shewanella pealeana (strain ATCC 700345 / ANG-SQ1).